Consider the following 195-residue polypeptide: Probable GTP-binding protein EngB (195 aa).

In terms of domain architecture, EngB-type G spans 22–194 (LKGEVAFVGR…LDLISTLLKE (173 aa)). Residues 30-37 (GRSNVGKS), 56-60 (GKTRS), 74-77 (DLPG), 141-144 (TKMD), and 173-175 (TSS) each bind GTP. Residues Ser-37 and Thr-58 each coordinate Mg(2+).

Belongs to the TRAFAC class TrmE-Era-EngA-EngB-Septin-like GTPase superfamily. EngB GTPase family. Mg(2+) serves as cofactor.

Necessary for normal cell division and for the maintenance of normal septation. In Thermotoga maritima (strain ATCC 43589 / DSM 3109 / JCM 10099 / NBRC 100826 / MSB8), this protein is Probable GTP-binding protein EngB.